We begin with the raw amino-acid sequence, 105 residues long: Neuropeptide-like protein 32 (105 aa).

An N-terminal signal peptide occupies residues 1 to 22 (MRQFNLLLVFCLIALTALPVFS). A propeptide spanning residues 23 to 54 (FPNGLTMDSIDMEPMGAFDENGAADESPRVKR) is cleaved from the precursor. Gly59 is modified (glycine amide). Trp64 carries the post-translational modification Tryptophan amide. A glycine amide mark is found at Gly68, Gly73, and Gly80. At Trp86 the chain carries Tryptophan amide. Gly91 and Gly98 each carry glycine amide. Trp103 is subject to Tryptophan amide.

This sequence belongs to the YARP (YGGW-amide related peptide) family.

It localises to the secreted. In terms of biological role, may have antimicrobial activity. The protein is Neuropeptide-like protein 32 (nlp-32) of Caenorhabditis elegans.